The sequence spans 399 residues: PCI domain-containing protein 2 (399 aa).

Residue alanine 2 is modified to N-acetylalanine. The residue at position 45 (serine 45) is a Phosphoserine. A PCI domain is found at 210-391 (ITYKYYVGRK…QKLVVSKQNP (182 aa)).

The protein belongs to the CSN12 family. As to quaternary structure, component of the nuclear pore complex (NPC)-associated TREX-2 complex (transcription and export complex 2), composed of at least GANP, 2 copies of ENY2, PCID2, SEM1/DSS1, and either centrin CETN2 or centrin CETN3. The TREX-2 complex also associates with ALYREF/ALY and with the nucleoporin NUP153. Interacts with BRCA2. Interacts with SRCAP chromatin remodeling complex component ZNHIT1; the interaction results in inhibition of SRCAP complex activity, preventing the deposition of histone variant H2AZ1/H2A.Z to lymphoid fate regulator genes and restricting lymphoid lineage commitment. As to expression, highly expressed in bone marrow and haematopoietic progenitor cells but is almost undetectable in mature blood cells.

The protein localises to the cytoplasm. It localises to the nucleus. Its subcellular location is the nuclear pore complex. Required for B-cell survival through the regulation of the expression of cell-cycle checkpoint MAD2L1 protein during B cell differentiation. As a component of the TREX-2 complex, involved in the export of mRNAs to the cytoplasm through the nuclear pores. Binds and stabilizes BRCA2 and is thus involved in the control of R-loop-associated DNA damage and transcription-associated genomic instability. Blocks the activity of the SRCAP chromatin remodeling complex by interacting with SRCAP complex member ZNHIT1 and inhibiting its interaction with the complex. This prevents the deposition of histone variant H2AZ1/H2A.Z at the nucleosomes of key lymphoid fate regulator genes which suppresses their expression and restricts lymphoid lineage commitment. The polypeptide is PCI domain-containing protein 2 (Pcid2) (Mus musculus (Mouse)).